A 57-amino-acid polypeptide reads, in one-letter code: Large ribosomal subunit protein bL32 (57 aa).

Belongs to the bacterial ribosomal protein bL32 family.

The protein is Large ribosomal subunit protein bL32 (rpmF) of Halalkalibacterium halodurans (strain ATCC BAA-125 / DSM 18197 / FERM 7344 / JCM 9153 / C-125) (Bacillus halodurans).